A 232-amino-acid chain; its full sequence is Cytidylate kinase (232 aa).

ATP is bound at residue 15–23 (GPAGAGKST). Positions 164 to 192 (KEDPPPISQGQLAAEMKERDMRDSTRADA) are disordered. A compositionally biased stretch (basic and acidic residues) spans 178–189 (EMKERDMRDSTR).

Belongs to the cytidylate kinase family. Type 1 subfamily.

It localises to the cytoplasm. It carries out the reaction CMP + ATP = CDP + ADP. It catalyses the reaction dCMP + ATP = dCDP + ADP. The sequence is that of Cytidylate kinase from Solibacter usitatus (strain Ellin6076).